The primary structure comprises 412 residues: Divalent metal cation transporter MntH (412 aa).

The next 11 helical transmembrane spans lie at 19–39 (LALMGPAFIAAIGYIDPGNFA), 46–66 (ASFGYQLLWVVVWANLMAMLI), 94–114 (VWFYWVQAEIIAMATDLAEFI), 122–142 (LILGVSLLQGAVLTGIATFLI), 156–176 (VIGGLLLFVAAAYIVELFFSQ), 196–216 (AVFLAAGVLGATIMPHVIYLH), 241–261 (IAMTIAGFVNLAMMATAAAAF), 290–310 (IFGLSLVAAGLSSTVVGTLAG), 322–342 (IPLWVRRAVTMAPSFIVILMG), 348–368 (ILVMSQVLLSFGIALALVPLL), and 392–412 (AIVVLVVALNIWLLVGTALGL).

The protein belongs to the NRAMP family.

The protein localises to the cell inner membrane. Its function is as follows. H(+)-stimulated, divalent metal cation uptake system. This Cronobacter sakazakii (strain ATCC BAA-894) (Enterobacter sakazakii) protein is Divalent metal cation transporter MntH.